Reading from the N-terminus, the 568-residue chain is Hexose transporter 1 (568 aa).

Residues 1–32 (MATEEMREKSLKREAESLWDIPPESYASKACS) lie on the Cytoplasmic side of the membrane. Residues 33 to 53 (CMGTAAQLVMVAVLGSFQFGF) traverse the membrane as a helical segment. Topologically, residues 54-86 (NLSALNTSKAFIILDFGWCKDENGGHYSDCDTG) are extracellular. Cysteines 72 and 83 form a disulfide. Residues 87–107 (LVYGSLINTAVFLGACVGCLL) form a helical membrane-spanning segment. The Cytoplasmic portion of the chain corresponds to 108–119 (GGRLTDFGRRAS). Residues 120 to 140 (LIFTHCVCTLGCILSAAAEGF) form a helical membrane-spanning segment. Over 141-142 (PT) the chain is Extracellular. Residues 143–163 (LLIARLVVGVAVGMFTVCVPM) traverse the membrane as a helical segment. Over 164-182 (YLSEVTPDDRRGYFGTFHQ) the chain is Cytoplasmic. Glutamine 182 contributes to the alpha-D-glucose binding site. Residue glutamine 182 coordinates beta-D-glucose. A helical transmembrane segment spans residues 183–203 (LFITLGIFFGTLLGLAFGNAP). The Extracellular segment spans residues 204 to 220 (AGDEVYEVSTFQQAWWR). Residues 221-241 (VMLGLPAVVSLLAIWLLWFVF) form a helical membrane-spanning segment. Residues 242–306 (PFETPQYMVE…KAIVHPTYRS (65 aa)) are Cytoplasmic-facing. Residues 307 to 327 (VILLACLLSIMQQFTGINVLV) form a helical membrane-spanning segment. Glutamine 318, glutamine 319, and asparagine 324 together coordinate alpha-D-glucose. Glutamine 318 contacts beta-D-glucose. Position 324 (asparagine 324) interacts with beta-D-glucose. The Extracellular segment spans residues 328–345 (ANSNNLYSSLKLPQDAVT). A helical membrane pass occupies residues 346–366 (GLTVGFTALNVFLTVITIPLV). Asparagine 355 lines the beta-D-glucose pocket. Topologically, residues 367-374 (DRLGRRTL) are cytoplasmic. A helical membrane pass occupies residues 375–395 (LLFSEAVMFVAMGIAFVANLV). Over 396–406 (DQSNTAVQWVT) the chain is Extracellular. A helical membrane pass occupies residues 407–427 (VACVYVFIVGFAVGYGPVLWI). Tryptophan 426 is an alpha-D-glucose binding site. Over 428 to 443 (YIHEIFPPEIKQGAAS) the chain is Cytoplasmic. Residues 444-464 (LASALNWVATVAIVLPSDFLL) form a helical membrane-spanning segment. Topologically, residues 465–469 (KQGFS) are extracellular. A helical transmembrane segment spans residues 470-490 (VFVGICTVALAIIFVVTFIFV). Residues 491 to 568 (KETKGLSIEE…DDLTKGTEVV (78 aa)) are Cytoplasmic-facing.

This sequence belongs to the major facilitator superfamily. Sugar transporter (TC 2.A.1.1) family. In terms of assembly, homodimer.

It localises to the cell membrane. It catalyses the reaction D-glucose(out) = D-glucose(in). It carries out the reaction D-fructose(out) = D-fructose(in). The enzyme catalyses D-galactose(in) = D-galactose(out). The catalysed reaction is D-mannose(out) = D-mannose(in). It catalyses the reaction D-glucosamine(out) = D-glucosamine(in). It carries out the reaction D-xylose(out) = D-xylose(in). Its activity is regulated as follows. Inhibited by cytochalasin B. Its function is as follows. Sodium-independent facilitative hexose transporter. Can transport D-glucose and D-mannose with high affinity, and D-fructose and D-galactose with low affinity. Can transport D-xylose and D-glucosamine. This Toxoplasma gondii protein is Hexose transporter 1.